The chain runs to 340 residues: Beta-ketoacyl-[acyl-carrier-protein] synthase III (340 aa).

Catalysis depends on residues Cys122 and His260. The tract at residues Gln261–Arg265 is ACP-binding. Asn291 is an active-site residue.

The protein belongs to the thiolase-like superfamily. FabH family. As to quaternary structure, homodimer.

The protein resides in the cytoplasm. The catalysed reaction is malonyl-[ACP] + acetyl-CoA + H(+) = 3-oxobutanoyl-[ACP] + CO2 + CoA. The protein operates within lipid metabolism; fatty acid biosynthesis. Its function is as follows. Catalyzes the condensation reaction of fatty acid synthesis by the addition to an acyl acceptor of two carbons from malonyl-ACP. Catalyzes the first condensation reaction which initiates fatty acid synthesis and may therefore play a role in governing the total rate of fatty acid production. Possesses both acetoacetyl-ACP synthase and acetyl transacylase activities. Its substrate specificity determines the biosynthesis of branched-chain and/or straight-chain of fatty acids. This chain is Beta-ketoacyl-[acyl-carrier-protein] synthase III, found in Mycobacteroides abscessus (strain ATCC 19977 / DSM 44196 / CCUG 20993 / CIP 104536 / JCM 13569 / NCTC 13031 / TMC 1543 / L948) (Mycobacterium abscessus).